We begin with the raw amino-acid sequence, 673 residues long: UvrABC system protein B (673 aa).

The Helicase ATP-binding domain maps to 26–183 (EGLEDGLAHQ…RRLAELQYAR (158 aa)). 39–46 (GVTGSGKT) contacts ATP. Positions 92 to 115 (YYDYYQPEAYVPSSDTFIEKDASV) match the Beta-hairpin motif. The 167-residue stretch at 431–597 (QVDDLLSEIR…GLNKKVVDIL (167 aa)) folds into the Helicase C-terminal domain. Residues 633–668 (QQKIHELEGLMMQHAQNLEFEEAAQVRDQLHQLRQL) form the UVR domain.

This sequence belongs to the UvrB family. In terms of assembly, forms a heterotetramer with UvrA during the search for lesions. Interacts with UvrC in an incision complex.

The protein localises to the cytoplasm. Its function is as follows. The UvrABC repair system catalyzes the recognition and processing of DNA lesions. A damage recognition complex composed of 2 UvrA and 2 UvrB subunits scans DNA for abnormalities. Upon binding of the UvrA(2)B(2) complex to a putative damaged site, the DNA wraps around one UvrB monomer. DNA wrap is dependent on ATP binding by UvrB and probably causes local melting of the DNA helix, facilitating insertion of UvrB beta-hairpin between the DNA strands. Then UvrB probes one DNA strand for the presence of a lesion. If a lesion is found the UvrA subunits dissociate and the UvrB-DNA preincision complex is formed. This complex is subsequently bound by UvrC and the second UvrB is released. If no lesion is found, the DNA wraps around the other UvrB subunit that will check the other stand for damage. This chain is UvrABC system protein B, found in Enterobacter sp. (strain 638).